The sequence spans 736 residues: Phosphoribosylformylglycinamidine synthase subunit PurL (736 aa).

His48 is a catalytic residue. Tyr51 and Lys90 together coordinate ATP. Glu92 serves as a coordination point for Mg(2+). Residues 93-96 and Arg115 contribute to the substrate site; that span reads SHNH. Catalysis depends on His94, which acts as the Proton acceptor. Asp116 contacts Mg(2+). Residue Gln239 coordinates substrate. A Mg(2+)-binding site is contributed by Asp267. 311–313 provides a ligand contact to substrate; it reads ESQ. Residues Asp492 and Gly529 each coordinate ATP. Residue Asn530 participates in Mg(2+) binding. Residue Ser532 participates in substrate binding.

This sequence belongs to the FGAMS family. As to quaternary structure, monomer. Part of the FGAM synthase complex composed of 1 PurL, 1 PurQ and 2 PurS subunits.

The protein resides in the cytoplasm. The enzyme catalyses N(2)-formyl-N(1)-(5-phospho-beta-D-ribosyl)glycinamide + L-glutamine + ATP + H2O = 2-formamido-N(1)-(5-O-phospho-beta-D-ribosyl)acetamidine + L-glutamate + ADP + phosphate + H(+). It functions in the pathway purine metabolism; IMP biosynthesis via de novo pathway; 5-amino-1-(5-phospho-D-ribosyl)imidazole from N(2)-formyl-N(1)-(5-phospho-D-ribosyl)glycinamide: step 1/2. In terms of biological role, part of the phosphoribosylformylglycinamidine synthase complex involved in the purines biosynthetic pathway. Catalyzes the ATP-dependent conversion of formylglycinamide ribonucleotide (FGAR) and glutamine to yield formylglycinamidine ribonucleotide (FGAM) and glutamate. The FGAM synthase complex is composed of three subunits. PurQ produces an ammonia molecule by converting glutamine to glutamate. PurL transfers the ammonia molecule to FGAR to form FGAM in an ATP-dependent manner. PurS interacts with PurQ and PurL and is thought to assist in the transfer of the ammonia molecule from PurQ to PurL. This chain is Phosphoribosylformylglycinamidine synthase subunit PurL, found in Bradyrhizobium sp. (strain ORS 278).